The chain runs to 492 residues: GTPase-GDP dissociation stimulator arz1 (492 aa).

The protein localises to the cytoplasm. Its subcellular location is the nucleus. Its function is as follows. Probably acts as a GEF (guanine nucleotide exchange factor) for the Rho family of small GTP-binding proteins (G proteins) that stimulates the dissociation of GDP to enable subsequent binding of GTP. May also chaperone the processing and/or trafficking of small GTPases independently of GEF activity. May be involved in the control of polarized cell growth via CDC42-mediated signaling. May also be involved in the control of cell-wall organization via RHO1-mediated signaling. This Schizosaccharomyces pombe (strain 972 / ATCC 24843) (Fission yeast) protein is GTPase-GDP dissociation stimulator arz1.